The following is a 619-amino-acid chain: Sodium-coupled monocarboxylate transporter 2 (619 aa).

Residues 1-9 (MRVKNFEAW) lie on the Extracellular side of the membrane. The helical transmembrane segment at 10–30 (DYVVFAGLFVISSGIGVFFAI) threads the bilayer. Topologically, residues 31-47 (KERKKTTSREFLVGGRQ) are cytoplasmic. The helical transmembrane segment at 48-68 (MSFGPVALSLTASFMSAVTVL) threads the bilayer. Residues 69-80 (GTPAEVYRFGAS) are Extracellular-facing. A helical membrane pass occupies residues 81–101 (FFLFLISYVFVVFFTSELFLP). The Cytoplasmic segment spans residues 102-128 (VFYRSGITSTYEYLQLRFNKPVRYAAT). Residues 129–149 (IIYIVQTILYTGVVVYAPALA) form a helical membrane-spanning segment. Topologically, residues 150–157 (LNQVTGFN) are extracellular. The chain crosses the membrane as a helical span at residues 158 to 178 (LWASVFATGIVCTFYCSLGGL). Over 179-180 (KA) the chain is Cytoplasmic. A helical membrane pass occupies residues 181-201 (VVWTDAFQMVVMIVGFLTVLI). Residues 202–235 (QGSNHVGGFNNVLEKAGNGSRLHIVDFDVDPLRR) are Extracellular-facing. N219 is a glycosylation site (N-linked (GlcNAc...) asparagine). A helical transmembrane segment spans residues 236-256 (HTFWTITIGGTFTWLGVYGVN). The Cytoplasmic segment spans residues 257–275 (QSTIQRCISCKTEKHAKLA). Residues 276–296 (LYFNLLGLWIIVACAVFSGLI) form a helical membrane-spanning segment. Residues 297 to 321 (MYSHFKDCDPWTSGVISAPDQLMPY) lie on the Extracellular side of the membrane. A helical membrane pass occupies residues 322–342 (FVMEIFATMPGLPGLFVACAF). Residues 343–385 (SGTLSTVAASINALATVTFEDFVKSCFPHLSDKLSTWISKGLC) are Cytoplasmic-facing. The chain crosses the membrane as a helical span at residues 386–406 (ILFGIMCTSMAVVASLMGSVV). The Extracellular segment spans residues 407–411 (QAALS). Residues 412-432 (IHGMCGGPMLGLFTLGLVFPF) traverse the membrane as a helical segment. The Cytoplasmic portion of the chain corresponds to 433–437 (VNWKG). Residues 438 to 458 (ALGGLLTGITLSFWVAIGSFI) form a helical membrane-spanning segment. Residues 459-504 (YPAPESKTLPLPLSTEHCVELNITTTVAPQISSRPVLADTWYSLSY) are Extracellular-facing. Residue N480 is glycosylated (N-linked (GlcNAc...) asparagine). The helical transmembrane segment at 505-525 (LYFSAVGCLGCIAAGIIISFL) threads the bilayer. The Cytoplasmic segment spans residues 526 to 619 (TGKQRGKDID…NSVPEKTTYF (94 aa)).

It belongs to the sodium:solute symporter (SSF) (TC 2.A.21) family. As to expression, expressed in the cortical region of the kidney corresponding to the proximal tubule. Expressed in Mueller cells of the inner retina (at protein level). Isoform 1 is expressed in the retina, kidney, small intestine and skeletal muscle. Isoform 2 is not detected in the kidney, small intestine and skeletal muscle. In the kidney, expressed predominantly in tubular epithelial cells of the cortical region and in the convoluted portions of the proximal tubule (pars convoluta). In the small intestine, its expression is highest in the proximal part and gradually decreased towards the distal end. Expressed in the neural retina. Not detected in the caecum and colon.

It is found in the apical cell membrane. The catalysed reaction is (S)-lactate(out) + Na(+)(out) = (S)-lactate(in) + Na(+)(in). It catalyses the reaction nicotinate(out) + Na(+)(out) = nicotinate(in) + Na(+)(in). It carries out the reaction pyruvate(out) + Na(+)(out) = pyruvate(in) + Na(+)(in). The enzyme catalyses propanoate(out) + Na(+)(out) = propanoate(in) + Na(+)(in). The catalysed reaction is butanoate(out) + Na(+)(out) = butanoate(in) + Na(+)(in). It catalyses the reaction acetoacetate(out) + Na(+)(out) = acetoacetate(in) + Na(+)(in). Its function is as follows. Acts as an electroneutral and low-affinity sodium (Na(+))-dependent sodium-coupled solute transporter. Catalyzes the transport across the plasma membrane of many monocarboxylates such as lactate, pyruvate, nicotinate, propionate, butyrate and beta-D-hydroxybutyrate. May be responsible for the first step of reabsorption of monocarboxylates from the lumen of the proximal tubule of the kidney and the small intestine. May play also a role in monocarboxylates transport in the retina. Mediates electroneutral uptake of lactate, with a stoichiometry of 2 Na(+) for each lactate. This is Sodium-coupled monocarboxylate transporter 2 (Slc5a12) from Mus musculus (Mouse).